Reading from the N-terminus, the 432-residue chain is Glutamyl-tRNA reductase (432 aa).

Residues Thr55–Arg58, Ser113, Glu118–Gln120, and Gln124 contribute to the substrate site. The Nucleophile role is filled by Cys56. Gly193–Ile198 contacts NADP(+).

Belongs to the glutamyl-tRNA reductase family. Homodimer.

It carries out the reaction (S)-4-amino-5-oxopentanoate + tRNA(Glu) + NADP(+) = L-glutamyl-tRNA(Glu) + NADPH + H(+). Its pathway is porphyrin-containing compound metabolism; protoporphyrin-IX biosynthesis; 5-aminolevulinate from L-glutamyl-tRNA(Glu): step 1/2. In terms of biological role, catalyzes the NADPH-dependent reduction of glutamyl-tRNA(Glu) to glutamate 1-semialdehyde (GSA). This is Glutamyl-tRNA reductase from Paracidovorax citrulli (strain AAC00-1) (Acidovorax citrulli).